Here is a 240-residue protein sequence, read N- to C-terminus: REF/SRPP-like protein At1g67360 (240 aa).

A disordered region spans residues 208 to 240; sequence KEDARRKKGGDTAGKKGETTDAADGDKSSSDSE.

This sequence belongs to the REF/SRPP family.

The chain is REF/SRPP-like protein At1g67360 from Arabidopsis thaliana (Mouse-ear cress).